The chain runs to 330 residues: D-lactate dehydrogenase (330 aa).

Residues 155–156, Asp175, 206–207, Asn212, 233–235, and Asp259 each bind NAD(+); these read RI, MP, and MAR. The active site involves Arg235. The active site involves Glu264. His296 acts as the Proton donor in catalysis.

It belongs to the D-isomer specific 2-hydroxyacid dehydrogenase family.

The enzyme catalyses (R)-lactate + NAD(+) = pyruvate + NADH + H(+). The sequence is that of D-lactate dehydrogenase (ldhD) from Streptococcus agalactiae serotype III (strain NEM316).